A 517-amino-acid polypeptide reads, in one-letter code: L-amino-acid oxidase (517 aa).

A signal peptide spans 1 to 18 (MNVFFMFSLLFLAALESC). Cysteine 29 and cysteine 192 are joined by a disulfide. FAD is bound by residues 62–63 (MA), 82–83 (EA), arginine 90, and 106–109 (GPMR). Arginine 109 is a binding site for substrate. The N-linked (GlcNAc...) asparagine glycan is linked to asparagine 191. FAD is bound at residue valine 280. Cysteine 350 and cysteine 431 are disulfide-bonded. Substrate is bound at residue tyrosine 391. FAD contacts are provided by residues glutamate 476 and 483-488 (GWIDST). Substrate is bound at residue 483 to 484 (GW).

Belongs to the flavin monoamine oxidase family. FIG1 subfamily. In terms of assembly, homodimer; non-covalently linked. Requires FAD as cofactor. Post-translationally, N-glycosylated. In terms of tissue distribution, expressed by the venom gland.

It is found in the secreted. It carries out the reaction an L-alpha-amino acid + O2 + H2O = a 2-oxocarboxylate + H2O2 + NH4(+). Catalyzes an oxidative deamination of predominantly hydrophobic and aromatic L-amino acids, thus producing hydrogen peroxide that may contribute to the diverse toxic effects of this enzyme. Exhibits diverse biological activities, such as hemorrhage, hemolysis, edema, apoptosis of vascular endothelial cells or tumor cell lines, antibacterial and antiparasitic activities, as well as regulation of platelet aggregation. Its effect on platelets is controversial, since it either induces aggregation or inhibits agonist-induced aggregation. These different effects are probably due to different experimental conditions. This Demansia vestigiata (Lesser black whip snake) protein is L-amino-acid oxidase.